Here is a 243-residue protein sequence, read N- to C-terminus: 4-hydroxy-tetrahydrodipicolinate reductase (243 aa).

Residues 9-14 (GANGKM), 78-80 (GTS), and 104-107 (APNF) each bind NAD(+). His-134 serves as the catalytic Proton donor/acceptor. His-135 contributes to the (S)-2,3,4,5-tetrahydrodipicolinate binding site. Residue Lys-138 is the Proton donor of the active site. 144 to 145 (GT) is a binding site for (S)-2,3,4,5-tetrahydrodipicolinate.

The protein belongs to the DapB family.

Its subcellular location is the cytoplasm. The enzyme catalyses (S)-2,3,4,5-tetrahydrodipicolinate + NAD(+) + H2O = (2S,4S)-4-hydroxy-2,3,4,5-tetrahydrodipicolinate + NADH + H(+). It carries out the reaction (S)-2,3,4,5-tetrahydrodipicolinate + NADP(+) + H2O = (2S,4S)-4-hydroxy-2,3,4,5-tetrahydrodipicolinate + NADPH + H(+). Its pathway is amino-acid biosynthesis; L-lysine biosynthesis via DAP pathway; (S)-tetrahydrodipicolinate from L-aspartate: step 4/4. In terms of biological role, catalyzes the conversion of 4-hydroxy-tetrahydrodipicolinate (HTPA) to tetrahydrodipicolinate. The protein is 4-hydroxy-tetrahydrodipicolinate reductase of Legionella pneumophila (strain Paris).